Consider the following 255-residue polypeptide: Proteasome subunit alpha (255 aa).

The span at Pro190–Thr201 shows a compositional bias: polar residues. Residues Pro190–Asn255 are disordered. Over residues Glu202–Gly217 the composition is skewed to basic and acidic residues.

This sequence belongs to the peptidase T1A family. In terms of assembly, the 20S proteasome core is composed of 14 alpha and 14 beta subunits that assemble into four stacked heptameric rings, resulting in a barrel-shaped structure. The two inner rings, each composed of seven catalytic beta subunits, are sandwiched by two outer rings, each composed of seven alpha subunits. The catalytic chamber with the active sites is on the inside of the barrel. Has a gated structure, the ends of the cylinder being occluded by the N-termini of the alpha-subunits. Is capped by the proteasome-associated ATPase, ARC.

It localises to the cytoplasm. It functions in the pathway protein degradation; proteasomal Pup-dependent pathway. With respect to regulation, the formation of the proteasomal ATPase ARC-20S proteasome complex, likely via the docking of the C-termini of ARC into the intersubunit pockets in the alpha-rings, may trigger opening of the gate for substrate entry. Interconversion between the open-gate and close-gate conformations leads to a dynamic regulation of the 20S proteasome proteolysis activity. Component of the proteasome core, a large protease complex with broad specificity involved in protein degradation. This chain is Proteasome subunit alpha, found in Saccharomonospora viridis (strain ATCC 15386 / DSM 43017 / JCM 3036 / CCUG 5913 / NBRC 12207 / NCIMB 9602 / P101) (Thermoactinomyces viridis).